A 287-amino-acid chain; its full sequence is Zinc transporter ZIP9 (287 aa).

A helical membrane pass occupies residues 4-24; sequence FLSISLLSLAMLVGCYVAGII. An N-linked (GlcNAc...) asparagine glycan is attached at N29. Transmembrane regions (helical) follow at residues 35 to 55, 107 to 127, 147 to 167, 177 to 197, and 211 to 231; these read LKLV…AVIV, AYIG…DQIG, ITTT…LGAA, LIVF…LVSF, and HLLV…LGLS. N242 carries an N-linked (GlcNAc...) asparagine glycan. A helical transmembrane segment spans residues 245–265; the sequence is GVAMLFSAGTFLYVATVHVLP. Residues 268–287 are disordered; that stretch reads TSTNQSGSSLSPRPLPSGKN. A glycan (N-linked (GlcNAc...) asparagine) is linked at N271. The span at 273-287 shows a compositional bias: low complexity; that stretch reads SGSSLSPRPLPSGKN.

It belongs to the ZIP transporter (TC 2.A.5) family.

The protein resides in the golgi apparatus. It is found in the trans-Golgi network membrane. The protein localises to the cell membrane. It localises to the cytoplasm. Its subcellular location is the perinuclear region. The protein resides in the mitochondrion. It is found in the nucleus. It carries out the reaction Zn(2+)(in) = Zn(2+)(out). In terms of biological role, transports zinc ions across cell and organelle membranes into the cytoplasm and regulates intracellular zinc homeostasis. Participates in the zinc ions efflux out of the secretory compartments. Regulates intracellular zinc level, resulting in the enhancement of AKT1 and MAPK3/MAPK1 (Erk1/2) phosphorylation in response to the BCR activation. Also functions as a membrane androgen receptor that mediates, through a G protein, the non-classical androgen signaling pathway, characterized by the activation of MAPK3/MAPK1 (Erk1/2) and transcription factors CREB1 or ATF1. This pathway contributes to CLDN1 and CLDN5 expression and tight junction formation between adjacent Sertoli cells. Mediates androgen-induced vascular endothelial cell proliferation through activation of an inhibitory G protein leading to the AKT1 and MAPK3/MAPK1 (Erk1/2) activation which in turn modulate inhibition (phosphorylation) of GSK3B and CCND1 transcription. Moreover, has dual functions as a membrane-bound androgen receptor and as an androgen-dependent zinc transporter both of which are mediated through an inhibitory G protein (Gi) that mediates both MAP kinase and zinc signaling leading to the androgen-dependent apoptotic process. The sequence is that of Zinc transporter ZIP9 from Rattus norvegicus (Rat).